The primary structure comprises 539 residues: Berberine bridge enzyme-like 21 (539 aa).

The N-terminal stretch at 1 to 26 (MIATQTFVSVFFFVFFLVSLPFFSSA) is a signal peptide. A disulfide bridge links C41 with C104. N79 is a glycosylation site (N-linked (GlcNAc...) asparagine). The FAD-binding PCMH-type domain maps to 82–256 (STPKPAIIVT…LGYKVKLVPV (175 aa)). The 6-(S-cysteinyl)-8alpha-(pros-histidyl)-FAD (His-Cys) cross-link spans 119–181 (HDYEGLSYIS…KVHGFPAGVC (63 aa)). N340 carries an N-linked (GlcNAc...) asparagine glycan.

It belongs to the oxygen-dependent FAD-linked oxidoreductase family. The cofactor is FAD. Post-translationally, the FAD cofactor is bound via a bicovalent 6-S-cysteinyl, 8alpha-N1-histidyl FAD linkage.

Its subcellular location is the secreted. It localises to the cell wall. This is Berberine bridge enzyme-like 21 from Arabidopsis thaliana (Mouse-ear cress).